A 198-amino-acid chain; its full sequence is Probable GTP-binding protein EngB (198 aa).

Residues 22–195 (GHPEIAFLGR…WSWLEQTAGL (174 aa)) enclose the EngB-type G domain. GTP-binding positions include 30–37 (GRSNVGKS), 57–61 (GKTQT), 75–78 (DVPG), 142–145 (TKID), and 174–176 (FSA). 2 residues coordinate Mg(2+): S37 and T59.

This sequence belongs to the TRAFAC class TrmE-Era-EngA-EngB-Septin-like GTPase superfamily. EngB GTPase family. Mg(2+) serves as cofactor.

Its function is as follows. Necessary for normal cell division and for the maintenance of normal septation. The sequence is that of Probable GTP-binding protein EngB from Lacticaseibacillus paracasei (strain ATCC 334 / BCRC 17002 / CCUG 31169 / CIP 107868 / KCTC 3260 / NRRL B-441) (Lactobacillus paracasei).